The chain runs to 474 residues: Light-independent protochlorophyllide reductase subunit N (474 aa).

[4Fe-4S] cluster contacts are provided by Cys-22, Cys-47, and Cys-107.

It belongs to the BchN/ChlN family. Protochlorophyllide reductase is composed of three subunits; ChlL, ChlN and ChlB. Forms a heterotetramer of two ChlB and two ChlN subunits. [4Fe-4S] cluster serves as cofactor.

The protein localises to the plastid. It localises to the chloroplast. It catalyses the reaction chlorophyllide a + oxidized 2[4Fe-4S]-[ferredoxin] + 2 ADP + 2 phosphate = protochlorophyllide a + reduced 2[4Fe-4S]-[ferredoxin] + 2 ATP + 2 H2O. The protein operates within porphyrin-containing compound metabolism; chlorophyll biosynthesis (light-independent). Functionally, component of the dark-operative protochlorophyllide reductase (DPOR) that uses Mg-ATP and reduced ferredoxin to reduce ring D of protochlorophyllide (Pchlide) to form chlorophyllide a (Chlide). This reaction is light-independent. The NB-protein (ChlN-ChlB) is the catalytic component of the complex. The chain is Light-independent protochlorophyllide reductase subunit N from Physcomitrium patens (Spreading-leaved earth moss).